A 313-amino-acid polypeptide reads, in one-letter code: WD repeat-containing protein 82-A (313 aa).

6 WD repeats span residues 19–58, 105–144, 146–184, 192–231, 236–276, and 280–313; these read ENSDKINCFDFSPTGETVISSSDDDSIVLYDCQEGKPKRT, GHSKRVVALSMSPVDDTFISASLDKTIRLWDLRSPNCQGL, HLQGKPVCSFDPEGLIFAAGVNSEMVKLYDLRSFDKGPF, DRTCEWTSLKFSQDGKLILMSTNGGFLRLVDAFKGAVMHT, NNSK…KVAV, and KHTGPITCLQFNPKFMTFASACSNMAFWLPTIDD.

This sequence belongs to the WD repeat SWD2 family. Component of the SET1/COMPASS complex. Component of the PNUTS-PP1 phosphatase complex.

The protein resides in the nucleus. The protein localises to the chromosome. It localises to the cytoplasm. Regulatory component of the SET1/COMPASS complex implicated in the tethering of this complex to transcriptional start sites of active genes. Facilitates histone H3 'Lys-4' methylation (H3K4me) via recruitment of the SETD1A or SETD1B to the 'Ser-5' phosphorylated C-terminal domain (CTD) of RNA polymerase II large subunit (POLR2A). Component of the PNUTS-PP1 protein phosphatase complex, a protein phosphatase 1 (PP1) complex that promotes RNA polymerase II transcription pause-release, allowing transcription elongation. The polypeptide is WD repeat-containing protein 82-A (wdr82-a) (Xenopus laevis (African clawed frog)).